The sequence spans 239 residues: Ribosomal RNA small subunit methyltransferase G (239 aa).

Residues G75, L80, A126 to E127, and R142 contribute to the S-adenosyl-L-methionine site.

The protein belongs to the methyltransferase superfamily. RNA methyltransferase RsmG family.

Its subcellular location is the cytoplasm. Specifically methylates the N7 position of guanine in position 518 of 16S rRNA. In Streptomyces coelicolor (strain ATCC BAA-471 / A3(2) / M145), this protein is Ribosomal RNA small subunit methyltransferase G.